The primary structure comprises 306 residues: RNA pseudouridylate synthase domain-containing protein 1 (306 aa).

Met-1 carries the post-translational modification N-acetylmethionine. Asp-67 is a catalytic residue. A disordered region spans residues 255-290 (RTDPDPDPMSGGPRPCSPSTPQPRPGRPPPETEAQR). Positions 269 to 285 (PCSPSTPQPRPGRPPPE) are enriched in pro residues.

Belongs to the pseudouridine synthase RluA family.

This is RNA pseudouridylate synthase domain-containing protein 1 (Rpusd1) from Mus musculus (Mouse).